The chain runs to 329 residues: Fructose-1,6-bisphosphatase class 1 (329 aa).

4 residues coordinate Mg(2+): Glu84, Asp103, Leu105, and Asp106. Substrate is bound by residues 106 to 109, Asn196, and Lys262; that span reads DGSS. Glu268 is a binding site for Mg(2+).

The protein belongs to the FBPase class 1 family. As to quaternary structure, homotetramer. Requires Mg(2+) as cofactor.

Its subcellular location is the cytoplasm. The catalysed reaction is beta-D-fructose 1,6-bisphosphate + H2O = beta-D-fructose 6-phosphate + phosphate. It functions in the pathway carbohydrate biosynthesis; gluconeogenesis. The polypeptide is Fructose-1,6-bisphosphatase class 1 (Shewanella pealeana (strain ATCC 700345 / ANG-SQ1)).